A 110-amino-acid polypeptide reads, in one-letter code: Membrane-associated protein slr1513 (110 aa).

It is found in the cellular thylakoid membrane. The protein resides in the cell membrane. The polypeptide is Membrane-associated protein slr1513 (Synechocystis sp. (strain ATCC 27184 / PCC 6803 / Kazusa)).